The primary structure comprises 512 residues: ATP synthase subunit beta 2 (512 aa).

174–181 (GGAGVGKT) lines the ATP pocket. Residues 479-494 (RRKEEAAREADARRDA) are compositionally biased toward basic and acidic residues. A disordered region spans residues 479-512 (RRKEEAAREADARRDAAAGAASGSAGPQGAQHGR).

Belongs to the ATPase alpha/beta chains family. In terms of assembly, F-type ATPases have 2 components, CF(1) - the catalytic core - and CF(0) - the membrane proton channel. CF(1) has five subunits: alpha(3), beta(3), gamma(1), delta(1), epsilon(1). CF(0) has three main subunits: a(1), b(2) and c(9-12). The alpha and beta chains form an alternating ring which encloses part of the gamma chain. CF(1) is attached to CF(0) by a central stalk formed by the gamma and epsilon chains, while a peripheral stalk is formed by the delta and b chains.

The protein resides in the cell inner membrane. It carries out the reaction ATP + H2O + 4 H(+)(in) = ADP + phosphate + 5 H(+)(out). In terms of biological role, produces ATP from ADP in the presence of a proton gradient across the membrane. The catalytic sites are hosted primarily by the beta subunits. This is ATP synthase subunit beta 2 from Burkholderia thailandensis (strain ATCC 700388 / DSM 13276 / CCUG 48851 / CIP 106301 / E264).